Reading from the N-terminus, the 614-residue chain is Dihydroxy-acid dehydratase 1 (614 aa).

A Mg(2+)-binding site is contributed by aspartate 81. Cysteine 122 is a [2Fe-2S] cluster binding site. Mg(2+) contacts are provided by aspartate 123 and lysine 124. Residue lysine 124 is modified to N6-carboxylysine. Cysteine 195 contacts [2Fe-2S] cluster. Glutamate 491 is a Mg(2+) binding site. Serine 517 functions as the Proton acceptor in the catalytic mechanism.

This sequence belongs to the IlvD/Edd family. Homodimer. [2Fe-2S] cluster serves as cofactor. The cofactor is Mg(2+).

The catalysed reaction is (2R)-2,3-dihydroxy-3-methylbutanoate = 3-methyl-2-oxobutanoate + H2O. It catalyses the reaction (2R,3R)-2,3-dihydroxy-3-methylpentanoate = (S)-3-methyl-2-oxopentanoate + H2O. The protein operates within amino-acid biosynthesis; L-isoleucine biosynthesis; L-isoleucine from 2-oxobutanoate: step 3/4. It participates in amino-acid biosynthesis; L-valine biosynthesis; L-valine from pyruvate: step 3/4. Its function is as follows. Functions in the biosynthesis of branched-chain amino acids. Catalyzes the dehydration of (2R,3R)-2,3-dihydroxy-3-methylpentanoate (2,3-dihydroxy-3-methylvalerate) into 2-oxo-3-methylpentanoate (2-oxo-3-methylvalerate) and of (2R)-2,3-dihydroxy-3-methylbutanoate (2,3-dihydroxyisovalerate) into 2-oxo-3-methylbutanoate (2-oxoisovalerate), the penultimate precursor to L-isoleucine and L-valine, respectively. In Mesorhizobium japonicum (strain LMG 29417 / CECT 9101 / MAFF 303099) (Mesorhizobium loti (strain MAFF 303099)), this protein is Dihydroxy-acid dehydratase 1.